The primary structure comprises 340 residues: GTP 3',8-cyclase (340 aa).

Residues 8-227 (KLGRPIRDLR…DMIESHFDIE (220 aa)) enclose the Radical SAM core domain. Position 17 (Arg-17) interacts with GTP. Residues Cys-24 and Cys-28 each coordinate [4Fe-4S] cluster. Tyr-30 is an S-adenosyl-L-methionine binding site. [4Fe-4S] cluster is bound at residue Cys-31. Residue Arg-71 coordinates GTP. Gly-75 contacts S-adenosyl-L-methionine. Residue Thr-102 coordinates GTP. Ser-126 is an S-adenosyl-L-methionine binding site. Lys-163 contacts GTP. Met-197 contacts S-adenosyl-L-methionine. [4Fe-4S] cluster contacts are provided by Cys-261 and Cys-264. Residue 266–268 (RAR) participates in GTP binding. Cys-278 lines the [4Fe-4S] cluster pocket.

The protein belongs to the radical SAM superfamily. MoaA family. Monomer and homodimer. [4Fe-4S] cluster is required as a cofactor.

It catalyses the reaction GTP + AH2 + S-adenosyl-L-methionine = (8S)-3',8-cyclo-7,8-dihydroguanosine 5'-triphosphate + 5'-deoxyadenosine + L-methionine + A + H(+). It participates in cofactor biosynthesis; molybdopterin biosynthesis. Functionally, catalyzes the cyclization of GTP to (8S)-3',8-cyclo-7,8-dihydroguanosine 5'-triphosphate. The chain is GTP 3',8-cyclase from Staphylococcus haemolyticus (strain JCSC1435).